Consider the following 971-residue polypeptide: Xylanolytic transcriptional activator xlnR (971 aa).

2 disordered regions span residues 1–25 (MSTT…PVGM) and 55–123 (GASA…PVRR). Low complexity predominate over residues 9–18 (FTSSFSPFSS). A compositionally biased stretch (polar residues) spans 67-96 (LRSSISKPQGQQLYSDESSAQHTQNATTGF). Positions 129-155 (CDQCNQLRTKCDGQNPCAHCIEFGLTC) form a DNA-binding region, zn(2)-C6 fungal-type. Polar residues-rich tracts occupy residues 182 to 199 (NGTA…SVSS), 227 to 241 (NLAT…QHSD), and 249 to 260 (QGSQQTPHSQPS). 3 disordered regions span residues 182 to 263 (NGTA…SLGG), 295 to 316 (LHPS…GMNS), and 580 to 610 (RELP…NLPP).

This sequence belongs to the xlnR/xlr1 family.

The protein resides in the nucleus. Functionally, transcriptional activator of the xylanolytic system. Involved in the regulation of extracellular cellulolytic and xylanolytic genes and in the regulation of the intracellular activities of D-xylose catabolic genes in the pentose catabolic pathway (PCP) in response to the presence of D-xylose. This chain is Xylanolytic transcriptional activator xlnR (xlnR), found in Aspergillus flavus (strain ATCC 200026 / FGSC A1120 / IAM 13836 / NRRL 3357 / JCM 12722 / SRRC 167).